The chain runs to 212 residues: MARFGVDEAGKGPVLGSMFAAAVAGDPAAVPDGVADSKRLSADRRAELDDRVRASMRVGVAEVPVDRIDDPETDMNTLTVAAQADALGRVVADGMAGYVDAGDVNEQRFGRRVANRVAADVAVTAEHGADDEYDLVAAASIVAKVARDAHVDALAAAFDADIGSGYPSDSTTREFLAAYVREHGELPECARASWQTSRDALGAAEQSALDEF.

One can recognise an RNase H type-2 domain in the interval 1-206 (MARFGVDEAG…SRDALGAAEQ (206 aa)). A divalent metal cation-binding residues include aspartate 7, glutamate 8, and aspartate 100.

The protein belongs to the RNase HII family. Requires Mn(2+) as cofactor. The cofactor is Mg(2+).

It localises to the cytoplasm. The catalysed reaction is Endonucleolytic cleavage to 5'-phosphomonoester.. Functionally, endonuclease that specifically degrades the RNA of RNA-DNA hybrids. The chain is Ribonuclease HII from Halobacterium salinarum (strain ATCC 29341 / DSM 671 / R1).